A 253-amino-acid chain; its full sequence is MQKLIMANWKMNGNSTSIKELCSGISQVQYDTSRVAIAVFPSSVYVKEVISQLPEKVGVGLQNITFYDDGAYTGEISARMLEDIGCDYLLIGHSERRSLFAESDEDVFKKLNKIIDTTITPVVCIGESLDDRQSGKLKQVLATQLSLILENLSVEQLAKVVIAYEPVWAIGTGVVASLEQIQETHQFIRSLLAKVDEKLAKNIKIVYGGSLKAENAKDILSLPNVDGGLIGGASLKAVEFNEIINQANKICTE.

A substrate-binding site is contributed by Asn8–Lys10. The active-site Electrophile is His93. Glu165 (proton acceptor) is an active-site residue. Residues Gly171, Ser210, and Gly231 to Gly232 contribute to the substrate site.

It belongs to the triosephosphate isomerase family. In terms of assembly, homodimer.

The protein resides in the cytoplasm. It catalyses the reaction D-glyceraldehyde 3-phosphate = dihydroxyacetone phosphate. The protein operates within carbohydrate biosynthesis; gluconeogenesis. It functions in the pathway carbohydrate degradation; glycolysis; D-glyceraldehyde 3-phosphate from glycerone phosphate: step 1/1. In terms of biological role, involved in the gluconeogenesis. Catalyzes stereospecifically the conversion of dihydroxyacetone phosphate (DHAP) to D-glyceraldehyde-3-phosphate (G3P). This chain is Triosephosphate isomerase, found in Francisella tularensis subsp. mediasiatica (strain FSC147).